Here is a 382-residue protein sequence, read N- to C-terminus: S-adenosylmethionine synthase (382 aa).

His16 is a binding site for ATP. Asp18 contacts Mg(2+). Glu44 is a binding site for K(+). Residues Glu57 and Gln100 each contribute to the L-methionine site. Positions 100-110 (QSADIAIGVDE) are flexible loop. ATP-binding positions include 165-167 (DAK), Asp240, 246-247 (RK), Ala263, and Lys267. Position 240 (Asp240) interacts with L-methionine. Lys271 contributes to the L-methionine binding site.

Belongs to the AdoMet synthase family. In terms of assembly, homotetramer; dimer of dimers. It depends on Mg(2+) as a cofactor. The cofactor is K(+).

The protein resides in the cytoplasm. It carries out the reaction L-methionine + ATP + H2O = S-adenosyl-L-methionine + phosphate + diphosphate. It participates in amino-acid biosynthesis; S-adenosyl-L-methionine biosynthesis; S-adenosyl-L-methionine from L-methionine: step 1/1. Its function is as follows. Catalyzes the formation of S-adenosylmethionine (AdoMet) from methionine and ATP. The overall synthetic reaction is composed of two sequential steps, AdoMet formation and the subsequent tripolyphosphate hydrolysis which occurs prior to release of AdoMet from the enzyme. The protein is S-adenosylmethionine synthase of Alcanivorax borkumensis (strain ATCC 700651 / DSM 11573 / NCIMB 13689 / SK2).